The chain runs to 231 residues: Translin-associated protein X homolog (231 aa).

Belongs to the translin family.

The protein localises to the cytoplasm. It localises to the nucleus. In Schizosaccharomyces pombe (strain 972 / ATCC 24843) (Fission yeast), this protein is Translin-associated protein X homolog.